A 452-amino-acid chain; its full sequence is Pup--protein ligase (452 aa).

A Mg(2+)-binding site is contributed by Glu9. ATP is bound at residue Arg53. Mg(2+) is bound at residue Tyr55. Residue Asp57 is the Proton acceptor of the active site. Mg(2+) is bound at residue Glu63. ATP is bound by residues Thr66 and Trp419.

It belongs to the Pup ligase/Pup deamidase family. Pup-conjugating enzyme subfamily.

The enzyme catalyses ATP + [prokaryotic ubiquitin-like protein]-L-glutamate + [protein]-L-lysine = ADP + phosphate + N(6)-([prokaryotic ubiquitin-like protein]-gamma-L-glutamyl)-[protein]-L-lysine.. It participates in protein degradation; proteasomal Pup-dependent pathway. It functions in the pathway protein modification; protein pupylation. In terms of biological role, catalyzes the covalent attachment of the prokaryotic ubiquitin-like protein modifier Pup to the proteasomal substrate proteins, thereby targeting them for proteasomal degradation. This tagging system is termed pupylation. The ligation reaction involves the side-chain carboxylate of the C-terminal glutamate of Pup and the side-chain amino group of a substrate lysine. The chain is Pup--protein ligase from Rhodococcus erythropolis (strain PR4 / NBRC 100887).